The sequence spans 714 residues: MAEFTNMLMNPWVLHLQKLELELKCPLCLKLLNRPVLLPCDHVFCDSCVHKSSQVESGCPVCKSKHPKKARRDLRFMESVISIYKSLNAAVSVHLPQLQIPNDCNYKNDALNNSNSPKHGESEDSEMTDKDVSKRSGGTDSSSRDGSPLPTSEESDPRPKHQDWTEKQLSDHLLLYEFESEYDAANHTPESYTEQAAKNVRDITASEQPSNAARKRICGDSFIQESSPNPKTQDPTLLRLMESLRSDDPTDYVKAQNHQQLPKSHTEQDSKRKRDITASDAMENHLKVPKRENNLMQKSADIDCNGKCSANSDDQLSEKISKALEQTSSNITICGFCQSARVSEATGEMLHYSRGRPVDGDDIFRSNVIHVHSACIEWAPQVYYEGDTVKNLKAELARGMKIKCTKCSLKGAALGCFVKSCRRSYHVPCAREISRCRWDYEDFLLLCPAHSSVKFPNEKSGHRVSRAEPLPKINPAELCSLEQTPAFTKELVLCGSALSKSDKKLMESLAVRFNATISRYWNPSVTHVIASTDEKGACTRTLKVLMGILNGKWIINAAWMKASLKASQPVDEEPFEIQIDTQGCQDGPKTARLRAETNKPKLFEGLKFYFFGDFYKGYKEDLQNLVKVAGGTILNTEDELGAESSNNVNDQRSSSIVVYNIDPPHGCALGEEVTIIWQRANDAEALASQTGSRLVGHTWVLESIAGYKLHPVIG.

The RING-type zinc-finger motif lies at 25–63 (CPLCLKLLNRPVLLPCDHVFCDSCVHKSSQVESGCPVCK). 2 disordered regions span residues 106-165 (YKND…QDWT) and 254-283 (KAQNHQQLPKSHTEQDSKRKRDITASDAME). Over residues 118-134 (KHGESEDSEMTDKDVSK) the composition is skewed to basic and acidic residues. Low complexity predominate over residues 135-147 (RSGGTDSSSRDGS). Composition is skewed to basic and acidic residues over residues 155-165 (SDPRPKHQDWT) and 264-283 (SHTEQDSKRKRDITASDAME). The segment at 331-382 (ITICGFCQSARVSEATGEMLHYSRGRPVDGDDIFRSNVIHVHSACIEWAPQV) adopts a C2HC pre-PHD-type zinc-finger fold. A PHD-type zinc finger spans residues 402-451 (IKCTKCSLKGAALGCFVKSCRRSYHVPCAREISRCRWDYEDFLLLCPAHS). BRCT domains follow at residues 482-577 (EQTP…PFEI) and 598-713 (NKPK…HPVI).

Component of a DNA-protein complex on WUS and WOX5 promoters. Interacts with SYD. Forms heterodimer with BRCA1. In terms of tissue distribution, expressed in the shoot apical meristem (SAM), roots, flowers, embryos and seedlings. Mostly expressed in flowers and siliques, and, to a lower extent, in roots, rosette leaves, inflorescence and young cauline leaves.

The protein resides in the nucleus. Its function is as follows. Binds specifically to H3K4me3 regions of target genes (e.g. WUS and WOX5) promoters to repress their transcription via chromatin remodeling. Required for the shoot apical meristem (SAM) organization and maintenance, by confining WUS expression to the organizing center, and for the quiescent center (QC) development in the root apical meristem (RAM), by repressing WOX5 expression in the root proximal meristem. Plays a role in DNA repair and in cell-cycle control. Required for the repair of DNA double-strand breaks (DSBs), both natural and induced by genotoxic stress, by homologous recombination (HR). The chain is BRCA1-associated RING domain protein 1 from Arabidopsis thaliana (Mouse-ear cress).